A 149-amino-acid chain; its full sequence is Nucleoside diphosphate kinase (149 aa).

K9, F57, R85, T91, R102, and N112 together coordinate ATP. The Pros-phosphohistidine intermediate role is filled by H115.

The protein belongs to the NDK family. As to quaternary structure, homotetramer. It depends on Mg(2+) as a cofactor.

Its subcellular location is the cytoplasm. The catalysed reaction is a 2'-deoxyribonucleoside 5'-diphosphate + ATP = a 2'-deoxyribonucleoside 5'-triphosphate + ADP. It carries out the reaction a ribonucleoside 5'-diphosphate + ATP = a ribonucleoside 5'-triphosphate + ADP. Its function is as follows. Major role in the synthesis of nucleoside triphosphates other than ATP. The ATP gamma phosphate is transferred to the NDP beta phosphate via a ping-pong mechanism, using a phosphorylated active-site intermediate. In Heliobacterium modesticaldum (strain ATCC 51547 / Ice1), this protein is Nucleoside diphosphate kinase.